The primary structure comprises 568 residues: Glucose-6-phosphate isomerase, cytosolic 1 (568 aa).

Residue Glu360 is the Proton donor of the active site. Active-site residues include His391 and Lys516.

It belongs to the GPI family. As to quaternary structure, homodimer.

The protein resides in the cytoplasm. The catalysed reaction is alpha-D-glucose 6-phosphate = beta-D-fructose 6-phosphate. It functions in the pathway carbohydrate degradation; glycolysis; D-glyceraldehyde 3-phosphate and glycerone phosphate from D-glucose: step 2/4. This is Glucose-6-phosphate isomerase, cytosolic 1 (PGIC1) from Clarkia mildrediae.